Reading from the N-terminus, the 874-residue chain is Alanine--tRNA ligase (874 aa).

Residues H564, H568, C665, and H669 each contribute to the Zn(2+) site.

It belongs to the class-II aminoacyl-tRNA synthetase family. The cofactor is Zn(2+).

It is found in the cytoplasm. It carries out the reaction tRNA(Ala) + L-alanine + ATP = L-alanyl-tRNA(Ala) + AMP + diphosphate. Its function is as follows. Catalyzes the attachment of alanine to tRNA(Ala) in a two-step reaction: alanine is first activated by ATP to form Ala-AMP and then transferred to the acceptor end of tRNA(Ala). Also edits incorrectly charged Ser-tRNA(Ala) and Gly-tRNA(Ala) via its editing domain. This Burkholderia thailandensis (strain ATCC 700388 / DSM 13276 / CCUG 48851 / CIP 106301 / E264) protein is Alanine--tRNA ligase.